We begin with the raw amino-acid sequence, 347 residues long: Phosphate acyltransferase (347 aa).

Belongs to the PlsX family. As to quaternary structure, homodimer. Probably interacts with PlsY.

The protein localises to the cytoplasm. The catalysed reaction is a fatty acyl-[ACP] + phosphate = an acyl phosphate + holo-[ACP]. Its pathway is lipid metabolism; phospholipid metabolism. In terms of biological role, catalyzes the reversible formation of acyl-phosphate (acyl-PO(4)) from acyl-[acyl-carrier-protein] (acyl-ACP). This enzyme utilizes acyl-ACP as fatty acyl donor, but not acyl-CoA. The sequence is that of Phosphate acyltransferase from Pediococcus pentosaceus (strain ATCC 25745 / CCUG 21536 / LMG 10740 / 183-1w).